Reading from the N-terminus, the 493-residue chain is Glutamyl-tRNA(Gln) amidotransferase subunit A (493 aa).

Catalysis depends on charge relay system residues K78 and S158. Residue S182 is the Acyl-ester intermediate of the active site.

The protein belongs to the amidase family. GatA subfamily. In terms of assembly, heterotrimer of A, B and C subunits.

It carries out the reaction L-glutamyl-tRNA(Gln) + L-glutamine + ATP + H2O = L-glutaminyl-tRNA(Gln) + L-glutamate + ADP + phosphate + H(+). Allows the formation of correctly charged Gln-tRNA(Gln) through the transamidation of misacylated Glu-tRNA(Gln) in organisms which lack glutaminyl-tRNA synthetase. The reaction takes place in the presence of glutamine and ATP through an activated gamma-phospho-Glu-tRNA(Gln). The polypeptide is Glutamyl-tRNA(Gln) amidotransferase subunit A (Rickettsia canadensis (strain McKiel)).